We begin with the raw amino-acid sequence, 263 residues long: MVSQFLVSQLELEFIAIGGRTHLRRAYSRGALKVLRPFPYGEGLVLQLLTLGPGLMGGDQVEIRVHVAPGAKVILLNQSATKVLPARGYRPVVQRLLFRVEGFLEYYPGLTIPHPASALDQRMEVSLGTEASFSWMEMYALGRLARGEVGKFKWIRARTAIFGQVPFYMDALELLPEELGPNHPGVLEGHPYLVCGFWNWESHPFFEETENGLLGVGLTAFRHSFLRGIGNKEVTQRALKIWSQERALRGLPAVDVMRYSSAL.

It belongs to the UreD family. As to quaternary structure, ureD, UreF and UreG form a complex that acts as a GTP-hydrolysis-dependent molecular chaperone, activating the urease apoprotein by helping to assemble the nickel containing metallocenter of UreC. The UreE protein probably delivers the nickel.

It is found in the cytoplasm. Functionally, required for maturation of urease via the functional incorporation of the urease nickel metallocenter. This chain is Urease accessory protein UreD 1, found in Synechococcus sp. (strain JA-3-3Ab) (Cyanobacteria bacterium Yellowstone A-Prime).